We begin with the raw amino-acid sequence, 867 residues long: DNA replication licensing factor mcm6 (867 aa).

The tract at residues 51–76 (IDKNNNNNNNEDNEDNNENENEYDEN) is disordered. Acidic residues predominate over residues 61–75 (EDNEDNNENENEYDE). The 207-residue stretch at 420 to 626 (IYQNLVNSIC…ESDHRIAEHI (207 aa)) folds into the MCM domain. ATP-binding residues include serine 473, threonine 474, lysine 476, serine 477, and asparagine 578. The short motif at 602–605 (SRFD) is the Arginine finger element. ADP is bound by residues arginine 693 and glutamate 696.

This sequence belongs to the MCM family. Component of the MCM2-7 complex. The complex forms a toroidal hexameric ring with the proposed subunit order MCM2-MCM6-MCM4-MCM7-MCM3-MCM5 (By simililarity).

The protein localises to the nucleus. It catalyses the reaction ATP + H2O = ADP + phosphate + H(+). In terms of biological role, acts as a component of the MCM2-7 complex (MCM complex) which is the replicative helicase essential for 'once per cell cycle' DNA replication initiation and elongation in eukaryotic cells. Core component of CDC45-MCM-GINS (CMG) helicase, the molecular machine that unwinds template DNA during replication, and around which the replisome is built. The active ATPase sites in the MCM2-7 ring are formed through the interaction surfaces of two neighboring subunits such that a critical structure of a conserved arginine finger motif is provided in trans relative to the ATP-binding site of the Walker A box of the adjacent subunit. The six ATPase active sites, however, are likely to contribute differentially to the complex helicase activity. The chain is DNA replication licensing factor mcm6 (mcm6) from Dictyostelium discoideum (Social amoeba).